The primary structure comprises 288 residues: 4-diphosphocytidyl-2-C-methyl-D-erythritol kinase (288 aa).

The active site involves lysine 8. 90-100 contributes to the ATP binding site; it reads PVGAGLAGGSS. Aspartate 132 is a catalytic residue.

This sequence belongs to the GHMP kinase family. IspE subfamily.

The catalysed reaction is 4-CDP-2-C-methyl-D-erythritol + ATP = 4-CDP-2-C-methyl-D-erythritol 2-phosphate + ADP + H(+). It functions in the pathway isoprenoid biosynthesis; isopentenyl diphosphate biosynthesis via DXP pathway; isopentenyl diphosphate from 1-deoxy-D-xylulose 5-phosphate: step 3/6. Functionally, catalyzes the phosphorylation of the position 2 hydroxy group of 4-diphosphocytidyl-2C-methyl-D-erythritol. The chain is 4-diphosphocytidyl-2-C-methyl-D-erythritol kinase from Chlamydia trachomatis serovar D (strain ATCC VR-885 / DSM 19411 / UW-3/Cx).